The following is a 459-amino-acid chain: Chaperone SurA (459 aa).

Residues 1-23 form the signal peptide; the sequence is MNHRLVALSVASLALLAPLTVPA. 2 PpiC domains span residues 197-301 and 312-411; these read VQQI…KVLE and VTQS…QLME.

The protein localises to the periplasm. The catalysed reaction is [protein]-peptidylproline (omega=180) = [protein]-peptidylproline (omega=0). Its function is as follows. Chaperone involved in the correct folding and assembly of outer membrane proteins. Recognizes specific patterns of aromatic residues and the orientation of their side chains, which are found more frequently in integral outer membrane proteins. May act in both early periplasmic and late outer membrane-associated steps of protein maturation. The sequence is that of Chaperone SurA from Albidiferax ferrireducens (strain ATCC BAA-621 / DSM 15236 / T118) (Rhodoferax ferrireducens).